The chain runs to 510 residues: NAD(P)H-quinone oxidoreductase subunit 2, chloroplastic (510 aa).

Helical transmembrane passes span 24 to 44, 59 to 79, 99 to 119, 124 to 144, 149 to 169, 184 to 204, 229 to 249, 295 to 315, 323 to 343, 354 to 374, 395 to 415, and 418 to 438; these read LLLF…GLIL, WFYF…FFRW, IFQF…VEYI, MAIT…MFLC, LITI…LSGY, LLMG…LYGL, ISIA…PAPF, WHLL…LIAL, MLAY…IVGD, YMLF…SFGL, ALSS…AGFF, and LYLF…IGLL.

This sequence belongs to the complex I subunit 2 family. NDH is composed of at least 16 different subunits, 5 of which are encoded in the nucleus.

It localises to the plastid. The protein localises to the chloroplast thylakoid membrane. The enzyme catalyses a plastoquinone + NADH + (n+1) H(+)(in) = a plastoquinol + NAD(+) + n H(+)(out). It catalyses the reaction a plastoquinone + NADPH + (n+1) H(+)(in) = a plastoquinol + NADP(+) + n H(+)(out). Its function is as follows. NDH shuttles electrons from NAD(P)H:plastoquinone, via FMN and iron-sulfur (Fe-S) centers, to quinones in the photosynthetic chain and possibly in a chloroplast respiratory chain. The immediate electron acceptor for the enzyme in this species is believed to be plastoquinone. Couples the redox reaction to proton translocation, and thus conserves the redox energy in a proton gradient. The sequence is that of NAD(P)H-quinone oxidoreductase subunit 2, chloroplastic from Coelogyne cristata (Orchid).